Here is an 89-residue protein sequence, read N- to C-terminus: Small ribosomal subunit protein bS20 (89 aa).

Disordered regions lie at residues Met1 to Lys25 and Lys69 to Ser89. Basic residues predominate over residues Ala7–His20.

Belongs to the bacterial ribosomal protein bS20 family.

Its function is as follows. Binds directly to 16S ribosomal RNA. This Geobacillus thermodenitrificans (strain NG80-2) protein is Small ribosomal subunit protein bS20.